The chain runs to 389 residues: MKIHEYQGKELLRQFNVPVPNGIPAFSVDEAVKAAEKLGGPVWVVKAQIHAGGRGKGGGVKLARSMDEVKKYASEILGMQLKTHQTGPEGQKVNRLLIEDGADIKKEYYFSIVTDRGTQKNVIMASSEGGMDIEEVAESHPEKIIKVFVDPMVGLTDADCDIVAKGIGVPEASIPMARDVFKNLYKTYWDTDASLVEINPLILEGNGKIKALDAKFNFDPNALFRHPEIVAYRDIDEEDAAEIEASKFDLAYISLDGNIGCLVNGAGLAMATMDTIKLFGGEPANFLDVGGGATAEKVTEAFKIMLKNKSVEAILVNIFGGIMRCDVIADGVVTACKAVNLTVPLVVRMKGTNEELGKKILADSGLPIISADSMAEAATKVVAAVAKNK.

The 236-residue stretch at Lys9–Glu244 folds into the ATP-grasp domain. ATP is bound by residues Lys46, Gly53–Gly55, Glu99, Ala102, and Glu107. Residues Asn199 and Asp213 each coordinate Mg(2+). Substrate-binding positions include Asn264 and Gly321–Met323.

Belongs to the succinate/malate CoA ligase beta subunit family. Heterotetramer of two alpha and two beta subunits. Requires Mg(2+) as cofactor.

It carries out the reaction succinate + ATP + CoA = succinyl-CoA + ADP + phosphate. It catalyses the reaction GTP + succinate + CoA = succinyl-CoA + GDP + phosphate. It functions in the pathway carbohydrate metabolism; tricarboxylic acid cycle; succinate from succinyl-CoA (ligase route): step 1/1. Succinyl-CoA synthetase functions in the citric acid cycle (TCA), coupling the hydrolysis of succinyl-CoA to the synthesis of either ATP or GTP and thus represents the only step of substrate-level phosphorylation in the TCA. The beta subunit provides nucleotide specificity of the enzyme and binds the substrate succinate, while the binding sites for coenzyme A and phosphate are found in the alpha subunit. The protein is Succinate--CoA ligase [ADP-forming] subunit beta of Polynucleobacter asymbioticus (strain DSM 18221 / CIP 109841 / QLW-P1DMWA-1) (Polynucleobacter necessarius subsp. asymbioticus).